The chain runs to 221 residues: Cytidylate kinase (221 aa).

Glycine 11–threonine 19 contacts ATP.

This sequence belongs to the cytidylate kinase family. Type 1 subfamily.

Its subcellular location is the cytoplasm. It catalyses the reaction CMP + ATP = CDP + ADP. The enzyme catalyses dCMP + ATP = dCDP + ADP. The sequence is that of Cytidylate kinase from Mycoplasmopsis pulmonis (strain UAB CTIP) (Mycoplasma pulmonis).